The sequence spans 590 residues: MAPAPATTSSSKRSKKRKQPVAPPPESDSESEELSYDTAAADEEEGEEEAPNQMEELEEEQEEEKKEKKQKKEMSKEKKRKKEKGNEGGSGILTNMLFSELGVSEPTARAIREMNYTYLTQIQARSIPHLLNGKDVMGAAKTGSGKTLAFLIPAIEMLHHAHFMPRNGTGVVVVCPTRELAIQTHNVAKELMKYHSQTLGYIIGGNGRRGEADQLAKGVNLLVATPGRLLDHLQNTKGFIYRRLKCLIIDEADRLLEQNFEEDMKQIFKRLPLNRQTVLFSATQTEQVKEFAKLSFEKNEESTSKPVYVGVDDAETNATVEGLQQGYCVIDSARRFLVLYAFLKKKQNKKVMVFFSSCNSVKFHAELLNFLQIECSDIHGKQKQQKRTTTFFNFCKAEKGILLCTNVAARGLDIPDVDFIVQYDPPDEPKDYIHRVGRTARGEKGKGEALLFLLPQELKFLIYLKAAKISLTELVFNENKVPNLQSHLENIVGENYFLNQSAKEAYRSYILAYDSHSMKDIFDVHNLNLKDVAASFCFKNPPKVNIDLESSASKHRRKMRKVDGGRRHGISAANPYGRKGGDDKRQFARF.

The disordered stretch occupies residues 1-92; the sequence is MAPAPATTSS…EKGNEGGSGI (92 aa). Residues 27–62 show a composition bias toward acidic residues; it reads SDSESEELSYDTAAADEEEGEEEAPNQMEELEEEQE. The stretch at 40 to 87 forms a coiled coil; the sequence is AADEEEGEEEAPNQMEELEEEQEEEKKEKKQKKEMSKEKKRKKEKGNE. The span at 63-76 shows a compositional bias: basic and acidic residues; the sequence is EEKKEKKQKKEMSK. The short motif at 96 to 124 is the Q motif element; that stretch reads MLFSELGVSEPTARAIREMNYTYLTQIQA. The Helicase ATP-binding domain maps to 127-302; sequence IPHLLNGKDV…KLSFEKNEES (176 aa). An ATP-binding site is contributed by 140-147; it reads AKTGSGKT. Positions 250–253 match the DEAD box motif; sequence DEAD. A Helicase C-terminal domain is found at 335-488; sequence RFLVLYAFLK…NKVPNLQSHL (154 aa). The disordered stretch occupies residues 551-590; that stretch reads SASKHRRKMRKVDGGRRHGISAANPYGRKGGDDKRQFARF. The span at 579–590 shows a compositional bias: basic and acidic residues; it reads KGGDDKRQFARF.

Belongs to the DEAD box helicase family. DDX18/HAS1 subfamily.

It catalyses the reaction ATP + H2O = ADP + phosphate + H(+). In Oryza sativa subsp. japonica (Rice), this protein is DEAD-box ATP-dependent RNA helicase 27.